Reading from the N-terminus, the 166-residue chain is Protein UTR5 (166 aa).

The chain is Protein UTR5 (UTR5) from Saccharomyces cerevisiae (strain ATCC 204508 / S288c) (Baker's yeast).